Reading from the N-terminus, the 542-residue chain is Protein OS-9 homolog (542 aa).

Residues 1 to 21 (MQAKIIYALSAISALIPLGSS) form the signal peptide. N-linked (GlcNAc...) asparagine glycans are attached at residues Asn-52 and Asn-74. 4 disulfides stabilise this stretch: Cys-70-Cys-258, Cys-117-Cys-130, Cys-193-Cys-227, and Cys-208-Cys-239. Residues 115 to 241 (ERCIFYQAGF…QVTIPELCNL (127 aa)) form the MRH domain. A mannooligosaccharide derivative-binding residues include Trp-125, Gln-137, Asp-194, Arg-200, Glu-223, and Tyr-229. The N-linked (GlcNAc...) asparagine glycan is linked to Asn-380. The disordered stretch occupies residues 497–528 (NARMDDDESTSHTTRDIGEAGSQTTGNTESEV). Over residues 505–514 (STSHTTRDIG) the composition is skewed to basic and acidic residues. Residues 517–528 (GSQTTGNTESEV) show a composition bias toward polar residues. Residues 539-542 (HDEL) carry the Prevents secretion from ER motif.

The protein belongs to the OS-9 family. Homodimer. Component of the HRD1 ubiquitin ligase complex which contains the E3 ligase HRD1, its cofactors HRD3, USA1 and DER1, substrate recruiting factor YOS9 and CDC48-binding protein UBX2. Within the complex, interacts (via N-terminus) with HRD3. In ERAD-L, HRD3 and YOS9 jointly bind misfolded glycoproteins in the endoplasmic reticulum (ER) lumen. Movement of ERAD-L substrates through the ER membrane is facilitated by HRD1 and DER1 which have lateral gates facing each other and which distort the membrane region between the lateral gates, making it much thinner than a normal phospholipid bilayer. Substrates insert into the membrane as a hairpin loop with one strand interacting with DER1 and the other with HRD1. The HRD1 complex interacts with the heterotrimeric CDC48-NPL4-UFD1 ATPase complex which is recruited by UBX2 via its interaction with CDC48 and which moves ubiquitinated substrates to the cytosol for targeting to the proteasome. Interacts with KAR2 and EMP47. Interacts with misfolded ER lumenal proteins like PCR1. Interacts with the GPI-anchored proteins GAS1 and MKC7.

It localises to the endoplasmic reticulum membrane. In terms of biological role, lectin involved in the quality control of the secretory pathway. As a member of the endoplasmic reticulum-associated degradation lumenal (ERAD-L) surveillance system, targets misfolded endoplasmic reticulum lumenal glycoproteins for degradation. The recognition of targets is N-glycan specific. Functions in recruiting misfolded protein substrates in conjunction with HRD3. In Saccharomyces cerevisiae (strain ATCC 204508 / S288c) (Baker's yeast), this protein is Protein OS-9 homolog (YOS9).